The chain runs to 713 residues: Early transcription factor 82 kDa subunit (713 aa).

It belongs to the poxviridae VETF large subunit family. In terms of assembly, heterodimer of a 70 kDa and a 82 kDa subunit. Part of the early transcription complex composed of ETF, RAP94, and the DNA-directed RNA polymerase.

In terms of biological role, acts with RNA polymerase to initiate transcription from early gene promoters. Is recruited by the RPO-associated protein of 94 kDa (RAP94) to form the early transcription complex, which also contains the core RNA polymerase. ETF heterodimer binds to early gene promoters. This is Early transcription factor 82 kDa subunit (VETFL) from Yaba monkey tumor virus (strain VR587) (YMTV).